The sequence spans 359 residues: Phospho-N-acetylmuramoyl-pentapeptide-transferase (359 aa).

Transmembrane regions (helical) follow at residues 3 to 23 (QILI…PVLI), 55 to 75 (VAIL…GLAL), 84 to 104 (GLLV…DDLI), 120 to 140 (TVGI…FGNA), 156 to 176 (IATV…LVSA), 187 to 207 (LDGL…LITF), 231 to 251 (LALV…WNAA), 255 to 275 (IFMG…LSVT), 280 to 300 (ILAV…VVQI), and 334 to 354 (FWLL…GEWL).

It belongs to the glycosyltransferase 4 family. MraY subfamily. Mg(2+) is required as a cofactor.

The protein localises to the cell membrane. The catalysed reaction is UDP-N-acetyl-alpha-D-muramoyl-L-alanyl-gamma-D-glutamyl-meso-2,6-diaminopimeloyl-D-alanyl-D-alanine + di-trans,octa-cis-undecaprenyl phosphate = di-trans,octa-cis-undecaprenyl diphospho-N-acetyl-alpha-D-muramoyl-L-alanyl-D-glutamyl-meso-2,6-diaminopimeloyl-D-alanyl-D-alanine + UMP. It participates in cell wall biogenesis; peptidoglycan biosynthesis. Catalyzes the initial step of the lipid cycle reactions in the biosynthesis of the cell wall peptidoglycan: transfers peptidoglycan precursor phospho-MurNAc-pentapeptide from UDP-MurNAc-pentapeptide onto the lipid carrier undecaprenyl phosphate, yielding undecaprenyl-pyrophosphoryl-MurNAc-pentapeptide, known as lipid I. This is Phospho-N-acetylmuramoyl-pentapeptide-transferase from Mycobacterium sp. (strain MCS).